Reading from the N-terminus, the 547-residue chain is MGGCNPFLKAARTLCPRIMPPLLFLSAFIFLVNVLGGAPGHNPDRRTKMISIHSLSELERLKLQETAYHELVARHFLSEFKPDRALPIDRPNTFEKWFLILRGQQRAVSLKTFGIRLEEVLVNELTRRKHLELTAAMQIEESTGQASGRRRGNVVQRLFGRIRRFFSSRRDEPSLPREFTRRGRRGAVSVDSLAELEDGALLLQTLQLSKISFPIGQRLLGSKRKMSLNPIAKQIPQVVEACCSFIEKHGLSAVGIFTLEYSEERVRELREEFDQGLDVVLDDTQNVHDVAALLKEFFRDMKDSLLPDDLYMSFLLTATLKPQDQLSALQLLVYLMPPCHSDTLERLLKALHKITENCEDSIGIDGQLVSGNRMTSTNLALVFGSALLKKGRFAKRESRKTRLGIDHYVASVNVVRAMIDNWDILFQVPPHIQKQVAKRVWKSSPEALDFIRRRNLRKIQSARIKMEEDALLSDPVENSAEAWAAVLAQSKPFDEGSSEEPAVPPGTAHSHDDEEGAGNPPIPEQDRPLLRVPREKQAKTGIGYFFP.

The N-terminal stretch at 1–40 (MGGCNPFLKAARTLCPRIMPPLLFLSAFIFLVNVLGGAPG) is a signal peptide. In terms of domain architecture, Rho-GAP spans 226–426 (MSLNPIAKQI…AMIDNWDILF (201 aa)). The interval 493–547 (FDEGSSEEPAVPPGTAHSHDDEEGAGNPPIPEQDRPLLRVPREKQAKTGIGYFFP) is disordered. Over residues 524-538 (EQDRPLLRVPREKQA) the composition is skewed to basic and acidic residues.

Functionally, GTPase activator for the Rho-type GTPases by converting them to an inactive GDP-bound state. This chain is Rho GTPase-activating protein 36 (ARHGAP36), found in Ailuropoda melanoleuca (Giant panda).